The sequence spans 317 residues: Type II methyltransferase M.NgoBI (317 aa).

The SAM-dependent MTase C5-type domain maps to 2 to 302 (YKTIDLFSGI…KICSLLFPAR (301 aa)). Cys-71 is a catalytic residue.

The protein belongs to the class I-like SAM-binding methyltransferase superfamily. C5-methyltransferase family.

The catalysed reaction is a 2'-deoxycytidine in DNA + S-adenosyl-L-methionine = a 5-methyl-2'-deoxycytidine in DNA + S-adenosyl-L-homocysteine + H(+). In terms of biological role, a methylase, recognizes the double-stranded sequence 5'-RGCGCY-3', methylates C-5 on both strands, and protects the DNA from cleavage by the NgoBI endonuclease. This is Type II methyltransferase M.NgoBI (ngoBIM) from Neisseria gonorrhoeae.